The chain runs to 443 residues: EP1-like glycoprotein 4 (443 aa).

The N-terminal stretch at 1–22 is a signal peptide; that stretch reads MEFSTTLALFFTLSIFLVGAQA. Positions 29-159 constitute a Bulb-type lectin domain; the sequence is QFRVVNEGGY…NGKFVWQSFD (131 aa). N-linked (GlcNAc...) asparagine glycans are attached at residues asparagine 66, asparagine 102, asparagine 258, and asparagine 269. Residues 254-296 form a WD repeat; it reads GSQFNVSTFLSRPKHNATLSFLRLESDGNIRVWSYSTLATSTA. A PAN domain is found at 356 to 433; sequence CDPKTFHYFK…TSLVAYVKAP (78 aa). Intrachain disulfides connect cysteine 387-cysteine 409 and cysteine 391-cysteine 397. Asparagine 434 carries an N-linked (GlcNAc...) asparagine glycan.

It localises to the secreted. Its subcellular location is the cell wall. The protein is EP1-like glycoprotein 4 of Arabidopsis thaliana (Mouse-ear cress).